Consider the following 158-residue polypeptide: Transcriptional repressor NrdR (158 aa).

The tract at residues 1 to 22 is disordered; the sequence is MRCPYCGSEDTQVKDSRPAEDN. A zinc finger lies at 3 to 34; sequence CPYCGSEDTQVKDSRPAEDNTSIRRRRICPDC. The segment covering 11–22 has biased composition (basic and acidic residues); it reads TQVKDSRPAEDN. One can recognise an ATP-cone domain in the interval 49–139; sequence LMVIKKTGRK…VYRDFSHAED (91 aa).

The protein belongs to the NrdR family. Requires Zn(2+) as cofactor.

In terms of biological role, negatively regulates transcription of bacterial ribonucleotide reductase nrd genes and operons by binding to NrdR-boxes. The protein is Transcriptional repressor NrdR of Rhizobium rhizogenes (strain K84 / ATCC BAA-868) (Agrobacterium radiobacter).